Reading from the N-terminus, the 196-residue chain is Protein GrpE (196 aa).

The tract at residues 1-40 (MSSKEQKTPEGQAPEEIIMDQHEEVEAVEPNDSAEQVDPR) is disordered.

The protein belongs to the GrpE family. As to quaternary structure, homodimer.

The protein localises to the cytoplasm. In terms of biological role, participates actively in the response to hyperosmotic and heat shock by preventing the aggregation of stress-denatured proteins, in association with DnaK and GrpE. It is the nucleotide exchange factor for DnaK and may function as a thermosensor. Unfolded proteins bind initially to DnaJ; upon interaction with the DnaJ-bound protein, DnaK hydrolyzes its bound ATP, resulting in the formation of a stable complex. GrpE releases ADP from DnaK; ATP binding to DnaK triggers the release of the substrate protein, thus completing the reaction cycle. Several rounds of ATP-dependent interactions between DnaJ, DnaK and GrpE are required for fully efficient folding. This chain is Protein GrpE, found in Salmonella gallinarum (strain 287/91 / NCTC 13346).